The chain runs to 339 residues: Uroporphyrinogen decarboxylase (339 aa).

Substrate is bound by residues Arg21–Arg25, Asp71, Tyr147, Ser202, and His315.

Belongs to the uroporphyrinogen decarboxylase family. Homodimer.

Its subcellular location is the cytoplasm. It carries out the reaction uroporphyrinogen III + 4 H(+) = coproporphyrinogen III + 4 CO2. Its pathway is porphyrin-containing compound metabolism; protoporphyrin-IX biosynthesis; coproporphyrinogen-III from 5-aminolevulinate: step 4/4. In terms of biological role, catalyzes the decarboxylation of four acetate groups of uroporphyrinogen-III to yield coproporphyrinogen-III. This is Uroporphyrinogen decarboxylase from Helicobacter pylori (strain HPAG1).